We begin with the raw amino-acid sequence, 287 residues long: MKRIFLLIATNFAILLVASIVMSILGVNTSTMGGLLVFAAIFGFGGSFISLAISKWMAKKTMGCEVITQPRDSMERWLVETVARQAEKSGIKMPEVAIYQSPEMNAFATGPSKNNALVAVSSGLLYGMTQDEIEGVLAHEVSHVANGDMVTLTLIQGVVNTFVIFAARVVAGIINNFVSSNDEEGEGLGMFAYMAVVFVLDMLFGILASMIVAYFSRIREFKADEGAARLAGKNKMIAALERLRQGPESGAMPAQMSAFGINGKRSIAELMMSHPPLEKRIAALKNS.

2 consecutive transmembrane segments (helical) span residues I4–I24 and G33–I53. H139 is a Zn(2+) binding site. Residue E140 is part of the active site. A Zn(2+)-binding site is contributed by H143. Helical transmembrane passes span L154–I174 and A195–F215. E220 contacts Zn(2+).

This sequence belongs to the peptidase M48B family. Requires Zn(2+) as cofactor.

It is found in the cell inner membrane. The polypeptide is Protease HtpX (Shewanella frigidimarina (strain NCIMB 400)).